The primary structure comprises 141 residues: Cholinesterase (141 aa).

Residue Asn39 is glycosylated (N-linked (GlcNAc...) asparagine). 49-50 (GS) serves as a coordination point for substrate. Ser131 functions as the Acyl-ester intermediate in the catalytic mechanism. Ser131 carries the post-translational modification Phosphoserine.

This sequence belongs to the type-B carboxylesterase/lipase family. As to quaternary structure, homotetramer; disulfide-linked. Dimer of dimers. As to expression, present in most cells except erythrocytes.

Its subcellular location is the secreted. It catalyses the reaction an acylcholine + H2O = a carboxylate + choline + H(+). Its function is as follows. Esterase with broad substrate specificity. Contributes to the inactivation of the neurotransmitter acetylcholine. Can degrade neurotoxic organophosphate esters. This is Cholinesterase (BCHE) from Ovis aries (Sheep).